Here is a 158-residue protein sequence, read N- to C-terminus: NADH-quinone oxidoreductase subunit B (158 aa).

[4Fe-4S] cluster is bound by residues Cys-37, Cys-38, Cys-102, and Cys-132.

The protein belongs to the complex I 20 kDa subunit family. In terms of assembly, NDH-1 is composed of 14 different subunits. Subunits NuoB, C, D, E, F, and G constitute the peripheral sector of the complex. It depends on [4Fe-4S] cluster as a cofactor.

The protein resides in the cell inner membrane. It catalyses the reaction a quinone + NADH + 5 H(+)(in) = a quinol + NAD(+) + 4 H(+)(out). NDH-1 shuttles electrons from NADH, via FMN and iron-sulfur (Fe-S) centers, to quinones in the respiratory chain. Couples the redox reaction to proton translocation (for every two electrons transferred, four hydrogen ions are translocated across the cytoplasmic membrane), and thus conserves the redox energy in a proton gradient. This Dechloromonas aromatica (strain RCB) protein is NADH-quinone oxidoreductase subunit B.